The following is a 31-amino-acid chain: Cytolysin Oshem 2 (31 aa).

The protein resides in the secreted. It is found in the nematocyst. The protein localises to the target cell membrane. Functionally, cytolysin that shows weak hemolysis and weak myonecrosis. The chain is Cytolysin Oshem 2 from Olindias sambaquiensis (Hydromedusa).